The primary structure comprises 343 residues: Delta(1)-pyrroline-2-carboxylate/Delta(1)-piperideine-2-carboxylate reductase (343 aa).

Ser-53 serves as the catalytic Charge relay system. His-54 acts as the Proton donor in catalysis. Arg-58 is a binding site for substrate. 126–130 is an NADP(+) binding site; sequence HFAAL. Residue Thr-166 participates in substrate binding. 184-186 is an NADP(+) binding site; it reads DLA. A substrate-binding site is contributed by 192–193; it reads HG. The active-site Charge relay system is the Asp-194. Residues 236–237 and 309–315 contribute to the NADP(+) site; these read HK and RLPGDRR.

Belongs to the LDH2/MDH2 oxidoreductase family. Homodimer.

It carries out the reaction L-pipecolate + NADP(+) = Delta(1)-piperideine-2-carboxylate + NADPH + H(+). It catalyses the reaction L-proline + NADP(+) = 1-pyrroline-2-carboxylate + NADPH + H(+). The catalysed reaction is N-methyl-L-alanine + NADP(+) + H2O = methylamine + pyruvate + NADPH + H(+). With respect to regulation, is inhibited by the substrate analog pyrrole-2-carboxylate, and by 2-picolinate. Catalyzes the reduction of both Delta(1)-pyrroline-2-carboxylate (Pyr2C) and Delta(1)-piperideine-2-carboxylate (Pip2C) to L-proline and L-pipecolate, respectively, using NADPH as the electron donor. Can catalyze the reverse oxidation reactions, albeit at a much lower rate. Is also able to catalyze in vitro the NADPH-dependent formation of N-methylalanine from pyruvate and N-methylamine; can act on other alpha-keto acids and specifically uses methylamine and not ammonia for these reductive amination reactions. Can use NADH instead of NADPH, although with much less efficiency. This is Delta(1)-pyrroline-2-carboxylate/Delta(1)-piperideine-2-carboxylate reductase from Pseudomonas syringae pv. tomato.